A 524-amino-acid polypeptide reads, in one-letter code: Coronin-2A (524 aa).

WD repeat units lie at residues 80–120 (GHRG…LTRN), 130–170 (GHAR…SVIA), 178–217 (CHQD…VLQE), 220–263 (YKGH…VPLT), and 269–308 (GSSG…PHLT). A disordered region spans residues 403–436 (LLDSQTLPPERPLSNSMVQVSPQPLEPMKQPAED). Residues 404–424 (LDSQTLPPERPLSNSMVQVSP) show a composition bias toward polar residues. The stretch at 484-523 (QMFYRQQEEIRRLRELLIQREVQTKQLELEIKNLRMALGQ) forms a coiled coil.

It belongs to the WD repeat coronin family. Binds actin. Component of the N-Cor repressor complex, at least composed of NCOR1, NCOR2, HDAC3, TBL1X, TBL1R, CORO2A and GPS2.

The polypeptide is Coronin-2A (Coro2a) (Mus musculus (Mouse)).